The primary structure comprises 393 residues: Telomeric repeat-binding factor 2-interacting protein 1 (393 aa).

Ala2 carries the post-translational modification N-acetylalanine. A BRCT domain is found at 10–101 (DPNGPTHSST…EKLELEAYRL (92 aa)). Phosphoserine occurs at positions 36 and 43. Residues 104–132 (TEQASDPKPGASAEGSTEPEPQPLTGRIA) form a disordered region. Lys111 is covalently cross-linked (Glycyl lysine isopeptide (Lys-Gly) (interchain with G-Cter in SUMO2)). The 61-residue stretch at 125–185 (QPLTGRIAYT…SLKDRYLKHL (61 aa)) folds into the Myb-like domain. A phosphoserine mark is found at Ser151 and Ser153. Lys191 is covalently cross-linked (Glycyl lysine isopeptide (Lys-Gly) (interchain with G-Cter in SUMO2)). 2 disordered regions span residues 194–248 (LGNA…EADN) and 272–305 (HITM…TQEV). Ser200 and Ser203 each carry phosphoserine. Residues Lys205, Lys209, and Lys237 each participate in a glycyl lysine isopeptide (Lys-Gly) (interchain with G-Cter in SUMO2) cross-link. A compositionally biased stretch (basic and acidic residues) spans 223–248 (QNKRTPDLPEEECVKGETKENGEADN). The segment covering 282–297 (TPEEDSETQPDEEEEE) has biased composition (acidic residues). A Glycyl lysine isopeptide (Lys-Gly) (interchain with G-Cter in SUMO2) cross-link involves residue Lys366. The Nuclear localization signal signature appears at 377–393 (KKYGAQNVARRIEFRKK).

It belongs to the RAP1 family. Associates with the I-kappa-B-kinase (IKK) core complex, composed of CHUK, IKBKB and IKBKG. Homodimer. Component of the shelterin complex (telosome) composed of TERF1, TERF2, TINF2, TERF2IP ACD and POT1. Interacts with TERF2 (but not TERF1) with its C-terminus. Interacts with SLX4/BTBD12. Interacts with TERF2; the interaction is direct.

It localises to the nucleus. The protein resides in the cytoplasm. It is found in the chromosome. The protein localises to the telomere. In terms of biological role, acts both as a regulator of telomere function and as a transcription regulator. Involved in the regulation of telomere length and protection as a component of the shelterin complex (telosome). In contrast to other components of the shelterin complex, it is dispensible for telomere capping and does not participate in the protection of telomeres against non-homologous end-joining (NHEJ)-mediated repair. Instead, it is required to negatively regulate telomere recombination and is essential for repressing homology-directed repair (HDR), which can affect telomere length. Does not bind DNA directly: recruited to telomeric double-stranded 5'-TTAGGG-3' repeats via its interaction with TERF2. Independently of its function in telomeres, also acts as a transcription regulator: recruited to extratelomeric 5'-TTAGGG-3' sites via its association with TERF2 or other factors, and regulates gene expression. When cytoplasmic, associates with the I-kappa-B-kinase (IKK) complex and acts as a regulator of the NF-kappa-B signaling by promoting IKK-mediated phosphorylation of RELA/p65, leading to activate expression of NF-kappa-B target genes. This is Telomeric repeat-binding factor 2-interacting protein 1 (Terf2ip) from Rattus norvegicus (Rat).